A 495-amino-acid polypeptide reads, in one-letter code: MDEFQRDGTNHRSWQQFFLYPLFFREDLYAIAHDHHLDRSSSSEPIEILISNYFSFLTVKRLIRRIRQQNDSIGLFGNCDPIQFIDRNRNSYSEPVLEALTVILEVSFAMRSKHFAETMSGWKSIRSIHCIFPLIEDKFPHSNYISDIRVPYSIHPEILVRTFRRWIRDTPSLHLLRFILHEWRNSFSAENLQKALVVPRENMRLSLFLWNSYVYECESFLVPLLKRFYRSRSLLYGSFPNRTHFDRKIKHIVIFPINISTKRIWLLKDSFIHYVRYGERSLIALKGTHLQVKKCRYHLFHFWQYYFHLWSQPYRICILELSKNDSFFLGYFLSFKIKPLVVRTKMLDDLFITDLVTNELNPISPIRSILLFLAKEKFCDISGHPISKLSWTSLTDDDILDRFDRICINLFHYYSGSINKDGLYYIKYILLLPCAKTLACKHKSTIRVVREESGSELFTKSFFKEQEFISSSFSKTRSQRERFWNSDIIQIKCPI.

This sequence belongs to the intron maturase 2 family. MatK subfamily.

Its subcellular location is the plastid. It is found in the chloroplast. Functionally, usually encoded in the trnK tRNA gene intron. Probably assists in splicing its own and other chloroplast group II introns. The protein is Maturase K of Torreya californica (California nutmeg).